A 231-amino-acid polypeptide reads, in one-letter code: MSENTDSTHEKLIFAPSRYQYEKSSLHRDALMGKDPLVLFNQWFQEATDDEGIKSPESTTLSTARLPSGRVSSRLVLLKELDHRGFIIFTNLGTSKKAKDLKSNPYASLSFWWEPLQRQVRVEGIIERLSREETEEYFKTRPRNSRIGAWASPQSEVIADREELEKRVEEYKKKFGEDESVPVPVPDFWGGIRIVPLEIEFWQGGKYRLHDRFSFRRNTLDEDYELVRLAP.

20–23 (QYEK) is a binding site for pyridoxal 5'-phosphate. 74 to 77 (RLVL) provides a ligand contact to FMN. Lysine 79 lines the pyridoxal 5'-phosphate pocket. FMN is bound by residues 89 to 90 (FT), 96 to 97 (KK), and glutamine 119. Pyridoxal 5'-phosphate contacts are provided by tyrosine 137, arginine 141, and serine 145. FMN-binding positions include 154–155 (QS) and tryptophan 202. Residue 208–210 (RLH) coordinates pyridoxal 5'-phosphate. Residue arginine 212 coordinates FMN.

It belongs to the pyridoxamine 5'-phosphate oxidase family. In terms of assembly, homodimer. The cofactor is FMN.

The enzyme catalyses pyridoxamine 5'-phosphate + O2 + H2O = pyridoxal 5'-phosphate + H2O2 + NH4(+). It carries out the reaction pyridoxine 5'-phosphate + O2 = pyridoxal 5'-phosphate + H2O2. The protein operates within cofactor metabolism; pyridoxal 5'-phosphate salvage; pyridoxal 5'-phosphate from pyridoxamine 5'-phosphate: step 1/1. It participates in cofactor metabolism; pyridoxal 5'-phosphate salvage; pyridoxal 5'-phosphate from pyridoxine 5'-phosphate: step 1/1. Catalyzes the oxidation of either pyridoxine 5'-phosphate (PNP) or pyridoxamine 5'-phosphate (PMP) into pyridoxal 5'-phosphate (PLP). In Schizosaccharomyces pombe (strain 972 / ATCC 24843) (Fission yeast), this protein is Probable pyridoxamine 5'-phosphate oxidase.